A 199-amino-acid chain; its full sequence is Recombination protein RecR (199 aa).

A C4-type zinc finger spans residues 57-72 (CQSCRTYTEETLCPIC). The Toprim domain occupies 81–176 (STICVVETPA…MISRIAHGVP (96 aa)).

Belongs to the RecR family.

In terms of biological role, may play a role in DNA repair. It seems to be involved in an RecBC-independent recombinational process of DNA repair. It may act with RecF and RecO. In Shewanella putrefaciens (strain CN-32 / ATCC BAA-453), this protein is Recombination protein RecR.